We begin with the raw amino-acid sequence, 284 residues long: 2-dehydro-3-deoxyphosphooctonate aldolase (284 aa).

It belongs to the KdsA family.

The protein resides in the cytoplasm. It catalyses the reaction D-arabinose 5-phosphate + phosphoenolpyruvate + H2O = 3-deoxy-alpha-D-manno-2-octulosonate-8-phosphate + phosphate. It participates in carbohydrate biosynthesis; 3-deoxy-D-manno-octulosonate biosynthesis; 3-deoxy-D-manno-octulosonate from D-ribulose 5-phosphate: step 2/3. The protein operates within bacterial outer membrane biogenesis; lipopolysaccharide biosynthesis. This Edwardsiella ictaluri (strain 93-146) protein is 2-dehydro-3-deoxyphosphooctonate aldolase.